Here is a 259-residue protein sequence, read N- to C-terminus: Energy-coupling factor transporter ATP-binding protein EcfA1 (259 aa).

The ABC transporter domain occupies 3–230 (ITLNSVSFRY…EFDDVEIPFK (228 aa)). 38-43 (GSGKTT) is an ATP binding site. The Proton acceptor role is filled by E157.

It belongs to the ABC transporter superfamily. Energy-coupling factor EcfA family. As to quaternary structure, forms a heterodimer with EcfA2. Forms a stable energy-coupling factor (ECF) transporter complex composed of 2 membrane-embedded substrate-binding proteins (S component, RibU, BioY), 2 ATP-binding proteins (A component) and 2 transmembrane proteins (T component) upon coexpression in E.coli. Stable subcomplexes with both A plus T components can also be isolated. This complex interacts with at least 2 substrate-specific components, BioY and RibU.

The protein localises to the cell inner membrane. Its function is as follows. ATP-binding (A) component of a common energy-coupling factor (ECF) ABC-transporter complex. Unlike classic ABC transporters this ECF transporter provides the energy necessary to transport a number of different substrates. Expression of the complex plus RibU in E.coli allows riboflavin uptake; uptake does not occur in the absence of RibU or the EcfA1A2T complex. This is Energy-coupling factor transporter ATP-binding protein EcfA1 from Thermotoga maritima (strain ATCC 43589 / DSM 3109 / JCM 10099 / NBRC 100826 / MSB8).